The following is a 1640-amino-acid chain: Clathrin heavy chain 2 (1640 aa).

The residue at position 2 (Ala2) is an N-acetylalanine. The segment at 2–479 (AQILPVRFQE…TDPMLALSVY (478 aa)) is globular terminal domain. WD40-like repeat regions lie at residues 24–67 (NIGF…RPIS), 68–107 (AESAIMNPASKVIALKAGKTLQIFNIEMKSKMKAHTMAEE), 108–149 (VIFW…TSLV), 150–195 (GCQV…QPIE), 196–257 (GHAA…PEAQ), 258–301 (NDFP…ISAD), and 302–330 (TIFVTAPHKPTSGIIGVNKKGQVLSVCVE). Ser67 is subject to Phosphoserine. Tyr184 is modified (phosphotyrosine). Phosphothreonine is present on Thr394. The binding site for the uncoating ATPase, involved in lattice disassembly stretch occupies residues 449 to 465 (EKWLKEDKLECSEELGD). A flexible linker region spans residues 480-523 (LRANVPSKVIQCFAETGQFQKIVLYAKKVGYTPDWIFLLRGVMK). The segment at 524-634 (ISPEQGLQFS…QALEHYTDLY (111 aa)) is distal segment. Residues 524–1640 (ISPEQGLQFS…PLVFDFDGHE (1117 aa)) are heavy chain arm. 7 CHCR repeats span residues 537–683 (VQDE…QLCV), 686–828 (ASKY…SEEV), 833–972 (IMAV…QLID), 979–1124 (LSET…VKEA), 1128–1269 (YIRG…FRFA), 1274–1420 (LHIV…LLIN), and 1423–1566 (LLVL…RECF). Residue Tyr634 is modified to Phosphotyrosine. The segment at 639–1640 (AVVHTHLLNP…PLVFDFDGHE (1002 aa)) is proximal segment. N6-succinyllysine is present on Lys737. Position 856 is an N6-acetyllysine (Lys856). Tyr899 is modified (phosphotyrosine). Phosphoserine is present on Ser1167. Tyr1206 is modified (phosphotyrosine). Positions 1213 to 1522 (AAKLLYSNVS…YLYKGNNWWA (310 aa)) are involved in binding clathrin light chain. Position 1229 is a phosphoserine (Ser1229). The residue at position 1441 (Lys1441) is an N6-acetyllysine; alternate. At Lys1441 the chain carries N6-succinyllysine; alternate. 2 positions are modified to phosphotyrosine: Tyr1477 and Tyr1487. Ser1494 carries the post-translational modification Phosphoserine. Lys1501 carries the post-translational modification N6-acetyllysine. Residues 1551-1640 (QKLLQWFLEE…PLVFDFDGHE (90 aa)) are trimerization.

This sequence belongs to the clathrin heavy chain family. As to quaternary structure, clathrin triskelions, composed of 3 heavy chains and 3 light chains, are the basic subunits of the clathrin coat. In the presence of light chains, hub assembly is influenced by both the pH and the concentration of calcium. May interact with OCRL. Interacts with AFTPH/aftiphilin. As to expression, maximal levels in skeletal muscle. High levels in heart and testis. Low expression detected in all other tissues.

The protein resides in the cytoplasmic vesicle membrane. It is found in the membrane. Its subcellular location is the coated pit. Functionally, clathrin is the major protein of the polyhedral coat of coated pits and vesicles. Two different adapter protein complexes link the clathrin lattice either to the plasma membrane or to the trans-Golgi network. The polypeptide is Clathrin heavy chain 2 (CLTCL1) (Homo sapiens (Human)).